Here is a 398-residue protein sequence, read N- to C-terminus: Metallophosphoesterase 1 (398 aa).

The chain crosses the membrane as a helical span at residues 25–45 (VCFVSSVLIFCEFFIYYLVIF). Residues aspartate 75, aspartate 117, asparagine 155, histidine 251, histidine 305, and histidine 307 each contribute to the a divalent metal cation site. The chain crosses the membrane as a helical span at residues 359–379 (VFAIYWAAGALLVVLVLAHFQ). The Di-lysine motif signature appears at 394–398 (KHKAA).

This sequence belongs to the metallophosphoesterase superfamily. MPPE1 family. The cofactor is Mn(2+).

Its subcellular location is the endoplasmic reticulum-Golgi intermediate compartment membrane. Its function is as follows. Metallophosphoesterase that catalyzes the removal of a side-chain ethanolamine-phosphate (EtNP) from the second mannose of the GPI-anchor protein intermediate. Participates in the glycan remodeling steps of GPI-anchor maturation to allow an efficient transport of GPI-anchor proteins from the endoplasmic reticulum to the Golgi. This is Metallophosphoesterase 1 from Gallus gallus (Chicken).